The chain runs to 546 residues: Arginine--tRNA ligase (546 aa).

Residues 122 to 132 (ANPTGPFTVGH) carry the 'HIGH' region motif.

Belongs to the class-I aminoacyl-tRNA synthetase family. Monomer.

The protein resides in the cytoplasm. The enzyme catalyses tRNA(Arg) + L-arginine + ATP = L-arginyl-tRNA(Arg) + AMP + diphosphate. This chain is Arginine--tRNA ligase (argS), found in Thermotoga maritima (strain ATCC 43589 / DSM 3109 / JCM 10099 / NBRC 100826 / MSB8).